Here is a 693-residue protein sequence, read N- to C-terminus: Elongation factor G (693 aa).

The region spanning 8-283 (NKVRNFGIAA…AVCDYLPSPL (276 aa)) is the tr-type G domain. GTP contacts are provided by residues 17-24 (AHIDAGKT), 81-85 (DTPGH), and 135-138 (NKMD).

Belongs to the TRAFAC class translation factor GTPase superfamily. Classic translation factor GTPase family. EF-G/EF-2 subfamily.

It localises to the cytoplasm. Its function is as follows. Catalyzes the GTP-dependent ribosomal translocation step during translation elongation. During this step, the ribosome changes from the pre-translocational (PRE) to the post-translocational (POST) state as the newly formed A-site-bound peptidyl-tRNA and P-site-bound deacylated tRNA move to the P and E sites, respectively. Catalyzes the coordinated movement of the two tRNA molecules, the mRNA and conformational changes in the ribosome. The protein is Elongation factor G of Endomicrobium trichonymphae.